The following is a 238-amino-acid chain: 7-cyano-7-deazaguanine synthase (238 aa).

Position 14–24 (14–24) interacts with ATP; it reads FSGGQDSATCL. Cys-202, Cys-217, Cys-220, and Cys-223 together coordinate Zn(2+).

This sequence belongs to the QueC family. It depends on Zn(2+) as a cofactor.

The enzyme catalyses 7-carboxy-7-deazaguanine + NH4(+) + ATP = 7-cyano-7-deazaguanine + ADP + phosphate + H2O + H(+). It functions in the pathway purine metabolism; 7-cyano-7-deazaguanine biosynthesis. Functionally, catalyzes the ATP-dependent conversion of 7-carboxy-7-deazaguanine (CDG) to 7-cyano-7-deazaguanine (preQ(0)). The protein is 7-cyano-7-deazaguanine synthase of Nitrobacter hamburgensis (strain DSM 10229 / NCIMB 13809 / X14).